The chain runs to 287 residues: NAD kinase (287 aa).

Aspartate 70 functions as the Proton acceptor in the catalytic mechanism. Residues 70-71 (DG), 144-145 (ND), arginine 155, lysine 172, aspartate 174, 185-190 (TAYSLS), and glutamine 244 each bind NAD(+).

It belongs to the NAD kinase family. A divalent metal cation is required as a cofactor.

The protein localises to the cytoplasm. The catalysed reaction is NAD(+) + ATP = ADP + NADP(+) + H(+). Its function is as follows. Involved in the regulation of the intracellular balance of NAD and NADP, and is a key enzyme in the biosynthesis of NADP. Catalyzes specifically the phosphorylation on 2'-hydroxyl of the adenosine moiety of NAD to yield NADP. This chain is NAD kinase, found in Solibacter usitatus (strain Ellin6076).